A 180-amino-acid chain; its full sequence is Acireductone dioxygenase (180 aa).

The Fe(2+) site is built by His97, His99, Glu103, and His141. 4 residues coordinate Ni(2+): His97, His99, Glu103, and His141.

Belongs to the acireductone dioxygenase (ARD) family. Monomer. Fe(2+) is required as a cofactor. The cofactor is Ni(2+).

It carries out the reaction 1,2-dihydroxy-5-(methylsulfanyl)pent-1-en-3-one + O2 = 3-(methylsulfanyl)propanoate + CO + formate + 2 H(+). The enzyme catalyses 1,2-dihydroxy-5-(methylsulfanyl)pent-1-en-3-one + O2 = 4-methylsulfanyl-2-oxobutanoate + formate + 2 H(+). Its pathway is amino-acid biosynthesis; L-methionine biosynthesis via salvage pathway; L-methionine from S-methyl-5-thio-alpha-D-ribose 1-phosphate: step 5/6. Its function is as follows. Catalyzes 2 different reactions between oxygen and the acireductone 1,2-dihydroxy-3-keto-5-methylthiopentene (DHK-MTPene) depending upon the metal bound in the active site. Fe-containing acireductone dioxygenase (Fe-ARD) produces formate and 2-keto-4-methylthiobutyrate (KMTB), the alpha-ketoacid precursor of methionine in the methionine recycle pathway. Ni-containing acireductone dioxygenase (Ni-ARD) produces methylthiopropionate, carbon monoxide and formate, and does not lie on the methionine recycle pathway. This chain is Acireductone dioxygenase, found in Yersinia pseudotuberculosis serotype O:1b (strain IP 31758).